The sequence spans 484 residues: Protein LAZ1 homolog 1 (484 aa).

A signal peptide spans 1–19 (MEWRGILCSLLFIVSVGES). The next 6 membrane-spanning stretches (helical) occupy residues 42–62 (PILS…YLIF), 76–96 (FLIG…LSLV), 190–210 (MILK…GVYG), 219–239 (GYPY…YCLV), 264–284 (IVFL…MGLV), and 299–319 (YIIC…FPAA). Positions 344 to 364 (PDPEEVKDSERTTRTRYGRHD) are disordered. Residues 347-364 (EEVKDSERTTRTRYGRHD) show a composition bias toward basic and acidic residues. The stretch at 406 to 428 (IAKINRTFHQISENVKRFEQQKK) forms a coiled coil. The segment at 459 to 484 (VSDSGLGSTNRHHQSRVSGLWTRMRR) is disordered.

Belongs to the TMEM184 family.

The protein resides in the membrane. The polypeptide is Protein LAZ1 homolog 1 (Arabidopsis thaliana (Mouse-ear cress)).